A 589-amino-acid polypeptide reads, in one-letter code: Sentrin-specific protease 2 (589 aa).

The short motif at 28 to 31 is the Nuclear localization signal element; sequence KRRR. Serine 32 is subject to Phosphoserine. Positions 46–51 match the Nuclear localization signal motif; the sequence is PAKRPR. A disordered region spans residues 155-176; the sequence is SEGCNRRPGGRRHSKGNPESSL. Positions 317 to 332 match the Nuclear export signal motif; it reads LEPDLSEEVSARLRLG. Phosphoserine is present on residues serine 333 and serine 344. The protease stretch occupies residues 396–560; sequence RITRGDIQTL…FTCKYADYIS (165 aa). Active-site residues include histidine 478 and aspartate 495. Residue cysteine 548 is the Nucleophile of the active site.

Belongs to the peptidase C48 family. As to quaternary structure, binds to SUMO2 and SUMO3. Interacts with the C-terminal domain of NUP153 via its N-terminus. Interacts with MTA1. In terms of processing, polyubiquitinated; which leads to proteasomal degradation.

It localises to the nucleus. Its subcellular location is the nuclear pore complex. The protein resides in the nucleus membrane. The protein localises to the cytoplasm. In terms of biological role, protease that catalyzes two essential functions in the SUMO pathway. The first is the hydrolysis of an alpha-linked peptide bond at the C-terminal end of the small ubiquitin-like modifier (SUMO) propeptides, SUMO1, SUMO2 and SUMO3 leading to the mature form of the proteins. The second is the deconjugation of SUMO1, SUMO2 and SUMO3 from targeted proteins, by cleaving an epsilon-linked peptide bond between the C-terminal glycine of the mature SUMO and the lysine epsilon-amino group of the target protein. May down-regulate CTNNB1 levels and thereby modulate the Wnt pathway. Deconjugates SUMO2 from MTA1. Plays a dynamic role in adipogenesis by desumoylating and promoting the stabilization of CEBPB. Acts as a regulator of the cGAS-STING pathway by catalyzing desumoylation of CGAS and STING1 during the late phase of viral infection. The polypeptide is Sentrin-specific protease 2 (Homo sapiens (Human)).